Reading from the N-terminus, the 3010-residue chain is Genome polyprotein (3010 aa).

S2 bears the N-acetylserine; by host mark. Residues 2-23 (STNPKPQRKTKRNTNRRPQDVK) form an interaction with STAT1 region. An interaction with EIF2AK2/PKR region spans residues 2-58 (STNPKPQRKTKRNTNRRPQDVKFPGGGQIVGGVYLLPRRGPRLGVRATRKASERSQP). The tract at residues 2–59 (STNPKPQRKTKRNTNRRPQDVKFPGGGQIVGGVYLLPRRGPRLGVRATRKASERSQPR) is interaction with DDX3X. Residues 2-75 (STNPKPQRKT…PKARRPEGRA (74 aa)) are disordered. Residues 2–168 (STNPKPQRKT…EDGVNYATGN (167 aa)) are Cytoplasmic-facing. Short sequence motifs (nuclear localization signal) lie at residues 5–13 (PKPQRKTKR) and 38–43 (PRRGPR). Positions 7 to 16 (PQRKTKRNTN) are enriched in basic residues. Positions 32–47 (GGVYLLPRRGPRLGVR) are enriched in low complexity. S53 carries the phosphoserine; by host modification. 2 short sequence motifs (nuclear localization signal) span residues 58-64 (PRGRRQP) and 66-71 (PKARRP). The segment covering 58-68 (PRGRRQPIPKA) has biased composition (basic residues). The residue at position 99 (S99) is a Phosphoserine; by host. The tract at residues 112-152 (PRRRSRNLGKVIDTLTCGFADLMGYIPLVGAPLGGAARALA) is important for endoplasmic reticulum and mitochondrial localization. Residue S116 is modified to Phosphoserine; by host PKA. An interaction with APOA2 region spans residues 122-173 (VIDTLTCGFADLMGYIPLVGAPLGGAARALAHGVRVLEDGVNYATGNLPGCS). The important for lipid droplets localization stretch occupies residues 164–167 (YATG). The chain crosses the membrane as a helical span at residues 169 to 189 (LPGCSFSIFLLALLSCLTIPA). Residues 178–191 (LLALLSCLTIPASA) constitute a propeptide, ER anchor for the core protein, removed in mature form by host signal peptidase. Topologically, residues 190 to 358 (SAYEVRNVSG…AGAHWGVLAG (169 aa)) are lumenal. Residues N196, N209, N234, and N250 are each glycosylated (N-linked (GlcNAc...) asparagine; by host). The segment at 265–296 (LVGTAAFCSAMYVGDLCGSIFLVSQLFTFSPR) is important for fusion. An N-linked (GlcNAc...) asparagine; by host glycan is attached at N305. A helical transmembrane segment spans residues 359-379 (LAYYSMVGNWAKVLIVALLFA). Residues 380-725 (GVDGETHTTG…WEYILLLFLL (346 aa)) lie on the Lumenal side of the membrane. The segment at 385-411 (THTTGRVAGHTTSGFTSLFSSGASQKI) is HVR1. Residues N417, N423, N430, and N448 are each glycosylated (N-linked (GlcNAc...) (high mannose) asparagine; by host). Cystine bridges form between C429–C552, C452–C459, C486–C494, and C503–C508. The segment at 474–479 (YTKPNS) is HVR2. The N-linked (GlcNAc...) asparagine; by host glycan is linked to N478. The CD81-binding 1 stretch occupies residues 480 to 493 (SDQRPYCWHYAPRP). A glycan (N-linked (GlcNAc...) (high mannose) asparagine; by host) is linked at N532. N-linked (GlcNAc...) asparagine; by host glycosylation is present at N540. Residues 544–551 (PPQGNWFG) form a CD81-binding 2 region. Residue N556 is glycosylated (N-linked (GlcNAc...) (high mannose) asparagine; by host). C564 and C569 are joined by a disulfide. N576 is a glycosylation site (N-linked (GlcNAc...) (high mannose) asparagine; by host). 3 disulfide bridges follow: C581-C585, C597-C620, and C607-C644. N623 and N645 each carry an N-linked (GlcNAc...) (high mannose) asparagine; by host glycan. C652 and C677 are oxidised to a cystine. The PKR/eIF2-alpha phosphorylation homology domain (PePHD) stretch occupies residues 660–671 (SELSPLLLSTTE). A helical membrane pass occupies residues 726-746 (LADARVCACLWMMLLIAQAEA). Residues 747–757 (ALENLVVLNAA) are Lumenal-facing. The helical transmembrane segment at 758 to 778 (SVAGAHGILSFLVFFCAAWYI) threads the bilayer. Residues 779-781 (KGR) lie on the Cytoplasmic side of the membrane. The helical transmembrane segment at 782–803 (LAPGAAYAFYGVWPLLLLLLAL) threads the bilayer. At 804-813 (PPRAYALDRE) the chain is on the lumenal side. Residues 814–834 (MAASCGGAVLVGLVFLTLSPY) traverse the membrane as a helical segment. Residues 835-838 (YKVF) lie on the Cytoplasmic side of the membrane. Residues 839–859 (LTRLIWWLQYFITRAEAHMQV) traverse the membrane as a helical segment. The Lumenal segment spans residues 860 to 881 (WVPPLNVRGGRDAIILLTCAVH). Residues 882-902 (PELIFDITKLLLAILGPLMVL) traverse the membrane as a helical segment. The 124-residue stretch at 903–1026 (QAGITRVPYF…SLEGQGWRLL (124 aa)) folds into the Peptidase C18 domain. At 903–1657 (QAGITRVPYF…CMSADLEVVT (755 aa)) the chain is on the cytoplasmic side. Positions 904–1206 (AGITRVPYFV…PVESMETTMR (303 aa)) are protease NS2-3. C922 carries the S-palmitoyl cysteine; by host lipid modification. The tract at residues 929-949 (AGGHYVQMAFMKLGALTGTYV) is interaction with host SCPS1. Residues H952, E972, and C993 each act as for protease NS2 activity; shared with dimeric partner in the active site. Residues 1027-1208 (APITAYSQQT…ESMETTMRSP (182 aa)) enclose the Peptidase S29 domain. Active-site charge relay system; for serine protease NS3 activity residues include H1083 and D1107. Positions 1123 and 1125 each coordinate Zn(2+). S1165 serves as the catalytic Charge relay system; for serine protease NS3 activity. Positions 1171 and 1175 each coordinate Zn(2+). In terms of domain architecture, Helicase ATP-binding spans 1217–1369 (PAVPQTFQVA…PNIEEIGLSN (153 aa)). 1230–1237 (APTGSGKS) is a binding site for ATP. The Mg(2+) site is built by S1237 and E1317. The short motif at 1316 to 1319 (DECH) is the DECH box element. Residues 1486-1497 (QRRGRTGRGRSG) form an RNA-binding region. Residues 1658-1678 (STWVLVGGVLAALAAYCLTTG) form a helical membrane-spanning segment. The tract at residues 1679–1690 (SVVIVGRIILSG) is NS3-binding. Topologically, residues 1679–1805 (SVVIVGRIIL…SITSPLTTQN (127 aa)) are cytoplasmic. Residues 1806–1824 (TLLFNILGGWVAAQLAPPS) traverse the membrane as a helical segment. The Lumenal portion of the chain corresponds to 1825 to 1828 (AASA). The helical transmembrane segment at 1829 to 1849 (FVGAGIAGAAVGSIGLGKVLV) threads the bilayer. A topological domain (cytoplasmic) is located at residue D1850. A helical membrane pass occupies residues 1851–1871 (ILAGYGAGVAGALVAFKVMSG). Over 1872–1881 (EVPSTEDLVN) the chain is Lumenal. The helical transmembrane segment at 1882 to 1902 (LLPAILSPGALVVGVVCAAIL) threads the bilayer. At 1903–1972 (RRHVGPGEGA…WINEDCSTPC (70 aa)) the chain is on the cytoplasmic side. Residues C1968 and C1972 are each lipidated (S-palmitoyl cysteine; by host). Residues 1973 to 2002 (SGSWLRDVWDWICTVLTDFKTWLQSKLLPR) lie within the membrane without spanning it. Residues 2003-2989 (LPGVPFLSCQ…YHSLSRARPR (987 aa)) are Cytoplasmic-facing. Residues C2011, C2029, C2031, and C2052 each contribute to the Zn(2+) site. Residues 2120–2208 (EFFTEVDGVR…ASSSASQLSA (89 aa)) form an FKBP8-binding region. Residues 2120–2332 (EFFTEVDGVR…PIPPPRRKRT (213 aa)) are transcriptional activation. The interaction with non-structural protein 4A stretch occupies residues 2135 to 2139 (PACKP). Residues 2187 to 2219 (KRRLARGSPPSLASSSASQLSAPSLKATCTTHH) are disordered. Residues 2189-2441 (RLARGSPPSL…PCAAEESKLP (253 aa)) form an interaction with host SKP2 region. S2194 bears the Phosphoserine; by host; in p56 mark. The span at 2194–2211 (SPPSLASSSASQLSAPSL) shows a compositional bias: low complexity. S2197, S2201, S2204, S2207, and S2210 each carry phosphoserine; by host; in p58. Residues 2210 to 2249 (SLKATCTTHHDSPDADLIEANLLWRQEMGGNITRVESENK) form an ISDR region. The tract at residues 2210–2275 (SLKATCTTHH…REISVAAEIL (66 aa)) is interaction with EIF2AK2/PKR. An NS4B-binding region spans residues 2249-2306 (KVVILDSFEPLHAEGDEREISVAAEILRKSRKFPSALPIWARPDYNPPLLESWKDPDY). The SH3-binding signature appears at 2322 to 2325 (PPIP). A Nuclear localization signal motif is present at residues 2326 to 2334 (PPRRKRTVV). Residue K2350 forms a Glycyl lysine isopeptide (Lys-Gly) (interchain with G-Cter in ubiquitin) linkage. Positions 2351 to 2365 (TFGSSGSSAVDSGTA) are enriched in polar residues. The tract at residues 2351–2407 (TFGSSGSSAVDSGTATALPDLASDDGDKGSDVESYSSMPPLEGEPGDPDLSDGSWST) is disordered. The V3 stretch occupies residues 2354–2377 (SSGSSAVDSGTATALPDLASDDGD). Phosphoserine; by host occurs at positions 2448 and 2461. Residues 2633–2751 (PMGFSYDTRC…ICESAGTQED (119 aa)) enclose the RdRp catalytic domain. Residues D2639, D2737, and D2738 each coordinate Mg(2+). The helical transmembrane segment at 2990 to 3010 (WFPLCLLLLSVGVGIYLLPNR) threads the bilayer.

The protein belongs to the hepacivirus polyprotein family. Homooligomer. Interacts with E1 (via C-terminus). Interacts with the non-structural protein 5A. Interacts (via N-terminus) with host STAT1 (via SH2 domain); this interaction results in decreased STAT1 phosphorylation and ubiquitin-mediated proteasome-dependent STAT1 degradation, leading to decreased IFN-stimulated gene transcription. Interacts with host STAT3; this interaction constitutively activates STAT3. Interacts with host LTBR receptor. Interacts with host TNFRSF1A receptor and possibly induces apoptosis. Interacts with host HNRPK. Interacts with host YWHAE. Interacts with host UBE3A/E6AP. Interacts with host DDX3X. Interacts with host APOA2. Interacts with host RXRA protein. Interacts with host SP110 isoform 3/Sp110b; this interaction sequesters the transcriptional corepressor SP110 away from the nucleus. Interacts with host CREB3 nuclear transcription protein; this interaction triggers cell transformation. Interacts with host ACY3. Interacts with host C1QR1. Interacts with host RBM24; this interaction, which enhances the interaction of the mature core protein with 5'-UTR, may inhibit viral translation and favor replication. Interacts with host EIF2AK2/PKR; this interaction induces the autophosphorylation of EIF2AK2. Part of the viral assembly initiation complex composed of NS2, E1, E2, NS3, NS4A, NS5A and the mature core protein. As to quaternary structure, forms a heterodimer with envelope glycoprotein E2. Interacts with mature core protein. Interacts with protease NS2. The heterodimer E1/E2 interacts with host CLDN1; this interaction plays a role in viral entry into host cell. Interacts with host SPSB2 (via C-terminus). Part of the viral assembly initiation complex composed of NS2, E1, E2, NS3, NS4A, NS5A and the mature core protein. Interacts with host NEURL3; this interaction prevents E1 binding to glycoprotein E2. In terms of assembly, forms a heterodimer with envelope glycoprotein E1. Interacts with host CD81 and SCARB1 receptors; these interactions play a role in viral entry into host cell. Interacts with host EIF2AK2/PKR; this interaction inhibits EIF2AK2 and probably allows the virus to evade the innate immune response. Interacts with host CD209/DC-SIGN and CLEC4M/DC-SIGNR. Interact with host SPCS1; this interaction is essential for viral particle assembly. Interacts with protease NS2. The heterodimer E1/E2 interacts with host CLDN1; this interaction plays a role in viral entry into host cell. Part of the viral assembly initiation complex composed of NS2, E1, E2, NS3, NS4A, NS5A and the mature core protein. Interacts with host SLC3A2/4F2hc; the interaction may facilitate viral entry into host cell. Interacts with human PLSCR1. Homohexamer. Homoheptamer. Interacts with protease NS2. As to quaternary structure, homodimer. Interacts with host SPCS1; this interaction is essential for viral particle assembly. Interacts with envelope glycoprotein E1. Interacts with envelope glycoprotein E2. Interacts with viroporin p7. Interacts with serine protease/helicase NS3. Part of the replication complex composed of NS2, NS3, NS4A, NS4B, NS5A and the RNA-directed RNA polymerase embedded in an ER-derived membranous web. Part of the viral assembly initiation complex composed of NS2, E1, E2, NS3, NS4A, NS5A and the mature core protein. In terms of assembly, interacts with protease NS2. Interacts with non-structural protein 4A; this interaction stabilizes the folding of NS3 serine protease. NS3-NS4A interaction is essential for NS3 activation and allows membrane anchorage of the latter. NS3/NS4A complex also prevents phosphorylation of host IRF3, thus preventing the establishment of dsRNA induced antiviral state. Interacts with host MAVS; this interaction leads to the cleavage and inhibition of host MAVS. Interacts with host TICAM1; this interaction leads to the cleavage and inhibition of host TICAM1. Interacts with host TANK-binding kinase/TBK1; this interaction results in the inhibition of the association between TBK1 and IRF3, which leads to the inhibition of IRF3 activation. Interacts with host RBM24. Part of the replication complex composed of NS2, NS3, NS4A, NS4B, NS5A and the RNA-directed RNA polymerase embedded in an ER-derived membranous web. Part of the viral assembly initiation complex composed of NS2, E1, E2, NS3, NS4A, NS5A and the mature core protein. Interacts with NS3 serine protease; this interaction stabilizes the folding of NS3 serine protease. NS3-NS4A interaction is essential for NS3 activation and allows membrane anchorage of the latter. Interacts with non-structural protein 5A (via N-terminus). Part of the replication complex composed of NS2, NS3, NS4A, NS4B, NS5A and the RNA-directed RNA polymerase embedded in an ER-derived membranous web. Part of the viral assembly initiation complex composed of NS2, E1, E2, NS3, NS4A, NS5A and the mature core protein. As to quaternary structure, homomultimer. Interacts with non-structural protein NS5A. Interacts with host PLA2G4C; this interaction likely initiates the recruitment of replication complexes to lipid droplets. Interacts with host STING; this interaction disrupts the interaction between STING and TBK1 thereby suppressing the interferon signaling. Part of the replication complex composed of NS2, NS3, NS4A, NS4B, NS5A and the RNA-directed RNA polymerase embedded in an ER-derived membranous web. In terms of assembly, monomer. Homodimer; dimerization is required for RNA-binding. Interacts with the mature core protein. Interacts (via N-terminus) with non-structural protein 4A. Interacts with non-structural protein 4B. Interacts (via region D2) with RNA-directed RNA polymerase. Part of the viral assembly initiation complex composed of NS2, E1, E2, NS3, NS4A, NS5A and the mature core protein. Part of the replication complex composed of NS2, NS3, NS4A, NS4B, NS5A and the RNA-directed RNA polymerase embedded in an ER-derived membranous web. Interacts with host GRB2. Interacts with host BIN1. Interacts with host PIK3R1. Interacts with host SRCAP. Interacts with host FKBP8. Interacts (via C-terminus) with host VAPB (via MSP domain). Interacts with host EIF2AK2/PKR; this interaction leads to disruption of EIF2AK2 dimerization by NS5A and probably allows the virus to evade the innate immune response. Interacts (via N-terminus) with host PACSIN2 (via N-terminus); this interaction attenuates protein kinase C alpha-mediated phosphorylation of PACSIN2 by disrupting the interaction between PACSIN2 and PRKCA. Interacts (via N-terminus) with host SRC kinase (via SH2 domain). Interacts with most Src-family kinases. Interacts with host IFI27 and SKP2; promotes the ubiquitin-mediated proteasomal degradation of NS5A. Interacts with host GPS2. Interacts with host TNFRSF21; this interaction allows the modulation by the virus of JNK, p38 MAPK, STAT3, and Akt signaling pathways in a DR6-dependent manner. Interacts (via N-terminus) with host CIDEB (via N-terminus); this interaction seems to regulate the association of HCV particles with APOE. Interacts with host CHKA/Choline Kinase-alpha; CHKA bridges host PI4KA and NS5A and potentiates NS5A-stimulated PI4KA activity, which then facilitates the targeting of the ternary complex to the ER for viral replication. Interacts with host SPSB2 (via C-terminus); this interaction targets NS5A for ubiquitination and degradation. Interacts with host RAB18; this interaction may promote the association of NS5A and other replicase components with lipid droplets. Interacts (via region D2) with host PPIA/CYPA; the interaction stimulates RNA-binding ability of NS5A and is dependent on the peptidyl-prolyl cis-trans isomerase activity of PPIA/CYPA. Interacts with host TRIM14; this interaction induces the degradation of NS5A. Homooligomer. Interacts with non-structural protein 5A. Interacts with host VAPB. Interacts with host PRK2/PKN2. Interacts with host HNRNPA1 and SEPT6; these interactions facilitate viral replication. Part of the replication complex composed of NS2, NS3, NS4A, NS4B, NS5A and the RNA-directed RNA polymerase. Zn(2+) serves as cofactor. Requires Mg(2+) as cofactor. In terms of processing, specific enzymatic cleavages in vivo yield mature proteins. The structural proteins, core, E1, E2 and p7 are produced by proteolytic processing by host signal peptidases. The core protein precursor is synthesized as a 23 kDa, which is retained in the ER membrane through the hydrophobic signal peptide. Cleavage by the signal peptidase releases the 21 kDa mature core protein. The cleavage of the core protein precursor occurs between aminoacids 176 and 188 but the exact cleavage site is not known. Some degraded forms of the core protein appear as well during the course of infection. The other proteins (p7, NS2, NS3, NS4A, NS4B, NS5A and NS5B) are cleaved by the viral proteases. Autoprocessing between NS2 and NS3 is mediated by the NS2 cysteine protease catalytic domain and regulated by the NS3 N-terminal domain. Phosphorylated by host PKC and PKA. Post-translationally, ubiquitinated; mediated by UBE3A and leading to core protein subsequent proteasomal degradation. In terms of processing, highly N-glycosylated. Palmitoylation is required for NS2/3 autoprocessing and E2 recruitment to membranes. Post-translationally, palmitoylated. This modification may play a role in its polymerization or in protein-protein interactions. In terms of processing, phosphorylated on serines in a basal form termed p56. p58 is a hyperphosphorylated form of p56. p56 and p58 coexist in the cell in roughly equivalent amounts. Hyperphosphorylation is dependent on the presence of NS4A. Host CSNK1A1/CKI-alpha or RPS6KB1 kinases may be responsible for NS5A phosphorylation. Tyrosine phosphorylation is essential for the interaction with host SRC. Post-translationally, the N-terminus is phosphorylated by host PRK2/PKN2.

It localises to the host endoplasmic reticulum membrane. Its subcellular location is the host mitochondrion membrane. The protein localises to the virion. The protein resides in the host cytoplasm. It is found in the host nucleus. It localises to the host lipid droplet. Its subcellular location is the virion membrane. The protein localises to the host mitochondrion. The protein resides in the host cell membrane. It is found in the host perinuclear region. The catalysed reaction is Hydrolysis of four peptide bonds in the viral precursor polyprotein, commonly with Asp or Glu in the P6 position, Cys or Thr in P1 and Ser or Ala in P1'.. It catalyses the reaction a ribonucleoside 5'-triphosphate + H2O = a ribonucleoside 5'-diphosphate + phosphate + H(+). The enzyme catalyses ATP + H2O = ADP + phosphate + H(+). It carries out the reaction RNA(n) + a ribonucleoside 5'-triphosphate = RNA(n+1) + diphosphate. With respect to regulation, inhibited by the antiviral drug hexamethylene amiloride. Inhibited by amantadine. Inhibition by amantadine appears to be genotype-dependent. Also inhibited by long-alkyl-chain iminosugar derivatives. Its activity is regulated as follows. Activity is up-regulated by PRK2/PKN2-mediated phosphorylation. Packages viral RNA to form a viral nucleocapsid, and promotes virion budding. Participates in the viral particle production as a result of its interaction with the non-structural protein 5A. Binds RNA and may function as a RNA chaperone to induce the RNA structural rearrangements taking place during virus replication. Modulates viral translation initiation by interacting with viral IRES and 40S ribosomal subunit. Affects various cell signaling pathways, host immunity and lipid metabolism. Prevents the establishment of cellular antiviral state by blocking the interferon-alpha/beta (IFN-alpha/beta) and IFN-gamma signaling pathways and by blocking the formation of phosphorylated STAT1 and promoting ubiquitin-mediated proteasome-dependent degradation of STAT1. Activates STAT3 leading to cellular transformation. Regulates the activity of cellular genes, including c-myc and c-fos. May repress the promoter of p53, and sequester CREB3 and SP110 isoform 3/Sp110b in the cytoplasm. Represses cell cycle negative regulating factor CDKN1A, thereby interrupting an important check point of normal cell cycle regulation. Targets transcription factors involved in the regulation of inflammatory responses and in the immune response: suppresses TNF-induced NF-kappa-B activation, and activates AP-1. Binds to dendritic cells (DCs) via C1QR1, resulting in down-regulation of T-lymphocytes proliferation. Alters lipid metabolism by interacting with hepatocellular proteins involved in lipid accumulation and storage. Induces up-regulation of FAS promoter activity, and thereby contributes to the increased triglyceride accumulation in hepatocytes (steatosis). In terms of biological role, forms a heterodimer with envelope glycoprotein E2, which mediates virus attachment to the host cell, virion internalization through clathrin-dependent endocytosis and fusion with host membrane. Fusion with the host cell is most likely mediated by both E1 and E2, through conformational rearrangements of the heterodimer required for fusion rather than a classical class II fusion mechanism. E1/E2 heterodimer binds host apolipoproteins such as APOB and APOE thereby forming a lipo-viro-particle (LVP). APOE associated to the LVP allows the initial virus attachment to cell surface receptors such as the heparan sulfate proteoglycans (HSPGs), syndecan-1 (SDC1), syndecan-1 (SDC2), the low-density lipoprotein receptor (LDLR) and scavenger receptor class B type I (SCARB1). The cholesterol transfer activity of SCARB1 allows E2 exposure and binding of E2 to SCARB1 and the tetraspanin CD81. E1/E2 heterodimer binding on CD81 activates the epithelial growth factor receptor (EGFR) signaling pathway. Diffusion of the complex E1-E2-EGFR-SCARB1-CD81 to the cell lateral membrane allows further interaction with Claudin 1 (CLDN1) and occludin (OCLN) to finally trigger HCV entry. Its function is as follows. Forms a heterodimer with envelope glycoprotein E1, which mediates virus attachment to the host cell, virion internalization through clathrin-dependent endocytosis and fusion with host membrane. Fusion with the host cell is most likely mediated by both E1 and E2, through conformational rearrangements of the heterodimer required for fusion rather than a classical class II fusion mechanism. The interaction between envelope glycoprotein E2 and host apolipoprotein E/APOE allows the proper assembly, maturation and infectivity of the viral particles. This interaction is probably promoted via the up-regulation of cellular autophagy by the virus. E1/E2 heterodimer binds host apolipoproteins such as APOB and APOE thereby forming a lipo-viro-particle (LVP). APOE associated to the LVP allows the initial virus attachment to cell surface receptors such as the heparan sulfate proteoglycans (HSPGs), syndecan-1 (SDC1), syndecan-1 (SDC2), the low-density lipoprotein receptor (LDLR) and scavenger receptor class B type I (SCARB1). The cholesterol transfer activity of SCARB1 allows E2 exposure and binding of E2 to SCARB1 and the tetraspanin CD81. E1/E2 heterodimer binding on CD81 activates the epithelial growth factor receptor (EGFR) signaling pathway. Diffusion of the complex E1-E2-EGFR-SCARB1-CD81 to the cell lateral membrane allows further interaction with Claudin 1 (CLDN1) and occludin (OCLN) to finally trigger HCV entry. Inhibits host EIF2AK2/PKR activation, preventing the establishment of an antiviral state. Viral ligand for CD209/DC-SIGN and CLEC4M/DC-SIGNR, which are respectively found on dendritic cells (DCs), and on liver sinusoidal endothelial cells and macrophage-like cells of lymph node sinuses. These interactions allow the capture of circulating HCV particles by these cells and subsequent transmission to permissive cells. Capture of circulating HCV particles by these SIGN+ cells may facilitate virus infection of proximal hepatocytes and lymphocyte subpopulations and may be essential for the establishment of persistent infection. Functionally, ion channel protein that acts as a viroporin and plays an essential role in the assembly, envelopment and secretion of viral particles. Regulates the host cell secretory pathway, which induces the intracellular retention of viral glycoproteins and favors assembly of viral particles. Creates a pore in acidic organelles and releases Ca(2+) and H(+) in the cytoplasm of infected cells, leading to a productive viral infection. High levels of cytoplasmic Ca(2+) may trigger membrane trafficking and transport of viral ER-associated proteins to viroplasms, sites of viral genome replication. This ionic imbalance induces the assembly of the inflammasome complex, which triggers the maturation of pro-IL-1beta into IL-1beta through the action of caspase-1. Targets also host mitochondria and induces mitochondrial depolarization. In addition of its role as a viroporin, acts as a lipid raft adhesion factor. Cysteine protease required for the proteolytic auto-cleavage between the non-structural proteins NS2 and NS3. The N-terminus of NS3 is required for the function of NS2 protease (active region NS2-3). Promotes the initiation of viral particle assembly by mediating the interaction between structural and non-structural proteins. In terms of biological role, displays three enzymatic activities: serine protease with a chymotrypsin-like fold, NTPase and RNA helicase. NS3 serine protease, in association with NS4A, is responsible for the cleavages of NS3-NS4A, NS4A-NS4B, NS4B-NS5A and NS5A-NS5B. The NS3/NS4A complex prevents phosphorylation of host IRF3, thus preventing the establishment of dsRNA induced antiviral state. The NS3/NS4A complex induces host amino acid transporter component SLC3A2, thus contributing to HCV propagation. NS3 RNA helicase binds to RNA and unwinds both dsDNA and dsRNA in the 3' to 5' direction, and likely resolves RNA complicated stable secondary structures in the template strand. Binds a single ATP and catalyzes the unzipping of a single base pair of dsRNA. Inhibits host antiviral proteins TBK1 and IRF3 thereby preventing the establishment of an antiviral state. Cleaves host MAVS/CARDIF thereby preventing the establishment of an antiviral state. Cleaves host TICAM1/TRIF, thereby disrupting TLR3 signaling and preventing the establishment of an antiviral state. Its function is as follows. Induces a specific membrane alteration that serves as a scaffold for the virus replication complex. This membrane alteration gives rise to the so-called ER-derived membranous web that contains the replication complex. NS4B self-interaction contributes to its function in membranous web formation. Promotes host TRIF protein degradation in a CASP8-dependent manner thereby inhibiting host TLR3-mediated interferon signaling. Disrupts the interaction between STING and TBK1 contributing to the inhibition of interferon signaling. Functionally, phosphorylated protein that is indispensable for viral replication and assembly. Both hypo- and hyperphosphorylated states are required for the viral life cycle. The hyperphosphorylated form of NS5A is an inhibitor of viral replication. Involved in RNA-binding and especially in binding to the viral genome. Zinc is essential for RNA-binding. Participates in the viral particle production as a result of its interaction with the mature viral core protein. Its interaction with host VAPB may target the viral replication complex to vesicles. Down-regulates viral IRES translation initiation. Mediates interferon resistance, presumably by interacting with and inhibiting host EIF2AK2/PKR. Prevents BIN1-induced apoptosis. Acts as a transcriptional activator of some host genes important for viral replication when localized in the nucleus. Via the interaction with host PACSIN2, modulates lipid droplet formation in order to promote virion assembly. Modulates TNFRSF21/DR6 signaling pathway for viral propagation. RNA-dependent RNA polymerase that performs primer-template recognition and RNA synthesis during viral replication. Initiates RNA transcription/replication at a flavin adenine dinucleotide (FAD), resulting in a 5'- FAD cap on viral RNAs. In this way, recognition of viral 5' RNA by host pattern recognition receptors can be bypassed, thereby evading activation of antiviral pathways. This Hepatitis C virus genotype 1b (strain HC-J4) (HCV) protein is Genome polyprotein.